We begin with the raw amino-acid sequence, 384 residues long: Glucans biosynthesis protein C (384 aa).

10 helical membrane-spanning segments follow: residues 17 to 37 (AWLM…THSW), 54 to 74 (FIHA…SYML), 91 to 111 (VGIP…ILLQ), 140 to 160 (LWFL…FTWF), 173 to 193 (AISL…YAAI), 212 to 232 (FIVM…LAFI), 240 to 260 (FTTP…AYLL), 274 to 294 (TESV…FSLG), 311 to 331 (ASLF…AYIT), and 338 to 358 (LIGF…LYEI).

Belongs to the acyltransferase 3 family. OpgC subfamily.

The protein localises to the cell membrane. The protein operates within glycan metabolism; osmoregulated periplasmic glucan (OPG) biosynthesis. In terms of biological role, necessary for the succinyl substitution of periplasmic glucans. Could catalyze the transfer of succinyl residues from the cytoplasmic side of the membrane to the nascent glucan backbones on the periplasmic side of the membrane. This is Glucans biosynthesis protein C from Salmonella gallinarum (strain 287/91 / NCTC 13346).